The primary structure comprises 204 residues: Transcription initiation factor TFIID subunit 11b (204 aa).

The tract at residues 38-60 is disordered; sequence PFEAAMEEQEESPVETEQTLEGD. The span at 42-58 shows a compositional bias: acidic residues; the sequence is AMEEQEESPVETEQTLE. Residues 106–195 form the Histone-fold domain; sequence FTEEQMSRYE…RRLKLQGKVP (90 aa).

The protein belongs to the TAF11 family. As to quaternary structure, component of the TFIID complex. TFIID is composed of TATA binding protein (TBP) and a number of TBP-associated factors (TAFs) whose MWs range from 14-217 kDa. Expressed in roots, leaves and inflorescences.

It is found in the nucleus. Functionally, TAFs are components of the transcription factor IID (TFIID) complex that is essential for mediating regulation of RNA polymerase transcription. This chain is Transcription initiation factor TFIID subunit 11b (TAF11B), found in Arabidopsis thaliana (Mouse-ear cress).